The following is a 337-amino-acid chain: Large ribosomal subunit protein uL3 (337 aa).

The segment at 1–32 (MAKGHRPRRGSLAYSPRKRSQSHIPRFRSWPE) is disordered.

Belongs to the universal ribosomal protein uL3 family. In terms of assembly, part of the 50S ribosomal subunit. Forms a cluster with proteins L14 and L24e.

In terms of biological role, one of the primary rRNA binding proteins, it binds directly near the 3'-end of the 23S rRNA, where it nucleates assembly of the 50S subunit. The polypeptide is Large ribosomal subunit protein uL3 (Methanococcoides burtonii (strain DSM 6242 / NBRC 107633 / OCM 468 / ACE-M)).